Reading from the N-terminus, the 332-residue chain is CAX-interacting protein 4 (332 aa).

Residues 33 to 59 (GYDPYAPTSKEEPKTTQQKTEDPENSY) form a disordered region. Residues 41–54 (SKEEPKTTQQKTED) show a composition bias toward basic and acidic residues. Residues 81–98 (GSCKKCGRVGHLTFQCRN) form a CCHC-type zinc finger. Positions 124-133 (IRRGVGKGEV) are enriched in basic and acidic residues. Residues 124–332 (IRRGVGKGEV…RKRHHRKERE (209 aa)) form a disordered region. Residues 134–153 (EEVSSEEEEESESSDSDVDS) show a composition bias toward acidic residues. Over residues 154 to 163 (EMERIIAERF) the composition is skewed to basic and acidic residues. Basic residues-rich tracts occupy residues 198–214 (RKRRRRSMKKRSSHKRR) and 227–236 (SKRRKERRGR). Positions 241–250 (DDSDESEDED) are enriched in acidic residues. 2 stretches are compositionally biased toward basic residues: residues 254–269 (VKRKSRKEKRRRRSRR) and 314–332 (SSKRSEKKSRKRHHRKERE).

In terms of assembly, interacts with CAX1. In terms of tissue distribution, expressed in leaves, stems and roots, and at lower levels in flowers.

It is found in the nucleus. Its function is as follows. May regulate CAX1 cation transporter. This chain is CAX-interacting protein 4 (CXIP4), found in Arabidopsis thaliana (Mouse-ear cress).